Consider the following 511-residue polypeptide: Chromosomal replication initiator protein DnaA (511 aa).

The domain I, interacts with DnaA modulators stretch occupies residues 1-90 (MSVELWQQCV…KRSSAPRAAP (90 aa)). The tract at residues 91-174 (NAPLAAAASQ…QVEGALKHTS (84 aa)) is domain II. The tract at residues 133–162 (VAAHDEPSRDSFDPMAGASSQQAPARAEQR) is disordered. Positions 135–144 (AHDEPSRDSF) are enriched in basic and acidic residues. The tract at residues 175–391 (YLNRTFTFEN…GALKRVIAHS (217 aa)) is domain III, AAA+ region. Positions 219, 221, 222, and 223 each coordinate ATP. The domain IV, binds dsDNA stretch occupies residues 392–511 (HFMGRDITIE…YKNLLRTLTT (120 aa)).

It belongs to the DnaA family. Oligomerizes as a right-handed, spiral filament on DNA at oriC.

The protein resides in the cytoplasm. Plays an essential role in the initiation and regulation of chromosomal replication. ATP-DnaA binds to the origin of replication (oriC) to initiate formation of the DNA replication initiation complex once per cell cycle. Binds the DnaA box (a 9 base pair repeat at the origin) and separates the double-stranded (ds)DNA. Forms a right-handed helical filament on oriC DNA; dsDNA binds to the exterior of the filament while single-stranded (ss)DNA is stabiized in the filament's interior. The ATP-DnaA-oriC complex binds and stabilizes one strand of the AT-rich DNA unwinding element (DUE), permitting loading of DNA polymerase. After initiation quickly degrades to an ADP-DnaA complex that is not apt for DNA replication. Binds acidic phospholipids. The chain is Chromosomal replication initiator protein DnaA from Pseudomonas savastanoi pv. phaseolicola (strain 1448A / Race 6) (Pseudomonas syringae pv. phaseolicola (strain 1448A / Race 6)).